We begin with the raw amino-acid sequence, 357 residues long: MSQPEFLPIQWKSTFLSLLDQRVLPGKKEFLQIQTMEETIVAIREMAVRGAPAIAITGIFGITLGAKKKSGNSNPVDVDSLIKQVFESRPTAVNLSFALKEAKKRVEGVSHWDSIAKVWESYALEMMVQDLKANQTLGKNGADLFPKNQNEFHIITHCNTGALATAGHGTALGVIRSLRDQGKKVVVYADETRPFLQGSRLTAFEMMEEGIECYIITDGMSGWLMNHRKIDAVLVGCDRVATNGDTANKIGTYNLAIVAYEHKVPFYVCATKDSFDLKLKTGDEIPIEMRKESEVTQFDFLKNEEGNFLFPEGKTSPIGARALNPSFDITKAKFIKNFITELGCFVPEEISFRLKNV.

Substrate-binding positions include Arg49 to Ala51, Arg89, and Gln197. Asp238 (proton donor) is an active-site residue. Residue Asn248–Lys249 coordinates substrate.

This sequence belongs to the eIF-2B alpha/beta/delta subunits family. MtnA subfamily.

It carries out the reaction 5-(methylsulfanyl)-alpha-D-ribose 1-phosphate = 5-(methylsulfanyl)-D-ribulose 1-phosphate. It functions in the pathway amino-acid biosynthesis; L-methionine biosynthesis via salvage pathway; L-methionine from S-methyl-5-thio-alpha-D-ribose 1-phosphate: step 1/6. Functionally, catalyzes the interconversion of methylthioribose-1-phosphate (MTR-1-P) into methylthioribulose-1-phosphate (MTRu-1-P). The chain is Methylthioribose-1-phosphate isomerase from Leptospira biflexa serovar Patoc (strain Patoc 1 / Ames).